The following is a 203-amino-acid chain: Orotate phosphoribosyltransferase (203 aa).

Residues R94, K98, H100, and 120-128 (EDLISTGGS) each bind 5-phospho-alpha-D-ribose 1-diphosphate. S124 contributes to the orotate binding site.

Belongs to the purine/pyrimidine phosphoribosyltransferase family. PyrE subfamily. As to quaternary structure, homodimer. It depends on Mg(2+) as a cofactor.

It catalyses the reaction orotidine 5'-phosphate + diphosphate = orotate + 5-phospho-alpha-D-ribose 1-diphosphate. It functions in the pathway pyrimidine metabolism; UMP biosynthesis via de novo pathway; UMP from orotate: step 1/2. Catalyzes the transfer of a ribosyl phosphate group from 5-phosphoribose 1-diphosphate to orotate, leading to the formation of orotidine monophosphate (OMP). This is Orotate phosphoribosyltransferase from Staphylococcus aureus (strain MSSA476).